The sequence spans 496 residues: MADKKKITASLIYAVSVAAIGSLQFGYNTGVINAPEKIIQAFYNRTLSQRSGETISPELLTSLWSLSVAIFSVGGMIGSFSVSLFFNRFGRRNSMLLVNVLAFAGGALMALSKIAKAVEMLIIGRFIIGLFCGLCTGFVPMYISEVSPTSLRGAFGTLNQLGIVVGILVAQIFGLEGIMGTEALWPLLLGFTIVPAVLQCVALLFCPESPRFLLINKMEEEKAQTVLQKLRGTQDVSQDISEMKEESAKMSQEKKATVLELFRSPNYRQPIIISITLQLSQQLSGINAVFYYSTGIFERAGITQPVYATIGAGVVNTVFTVVSLFLVERAGRRTLHLVGLGGMAVCAAVMTIALALKEKWIRYISIVATFGFVALFEIGPGPIPWFIVAELFSQGPRPAAMAVAGCSNWTSNFLVGMLFPYAEKLCGPYVFLIFLVFLLIFFIFTYFKVPETKGRTFEDISRGFEEQVETSSPSSPPIEKNPMVEMNSIEPDKEVA.

The Cytoplasmic portion of the chain corresponds to 1-11 (MADKKKITASL). The helical transmembrane segment at 12 to 33 (IYAVSVAAIGSLQFGYNTGVIN) threads the bilayer. Residues 34–65 (APEKIIQAFYNRTLSQRSGETISPELLTSLWS) lie on the Extracellular side of the membrane. Asn44 carries an N-linked (GlcNAc...) asparagine glycan. Residues 66–86 (LSVAIFSVGGMIGSFSVSLFF) traverse the membrane as a helical segment. Over 87 to 91 (NRFGR) the chain is Cytoplasmic. A helical membrane pass occupies residues 92–112 (RNSMLLVNVLAFAGGALMALS). At 113-119 (KIAKAVE) the chain is on the extracellular side. The chain crosses the membrane as a helical span at residues 120–143 (MLIIGRFIIGLFCGLCTGFVPMYI). Residues 144-154 (SEVSPTSLRGA) are Cytoplasmic-facing. A helical membrane pass occupies residues 155-175 (FGTLNQLGIVVGILVAQIFGL). Gln160 serves as a coordination point for D-glucose. Topologically, residues 176–184 (EGIMGTEAL) are extracellular. Residues 185–205 (WPLLLGFTIVPAVLQCVALLF) traverse the membrane as a helical segment. Over 206 to 270 (CPESPRFLLI…LFRSPNYRQP (65 aa)) the chain is Cytoplasmic. Residues 271 to 291 (IIISITLQLSQQLSGINAVFY) form a helical membrane-spanning segment. Residues 278–280 (QLS) are important for selectivity against fructose. Residues 281–282 (QQ) and Asn287 contribute to the D-glucose site. The Extracellular portion of the chain corresponds to 292-305 (YSTGIFERAGITQP). The helical transmembrane segment at 306-326 (VYATIGAGVVNTVFTVVSLFL) threads the bilayer. Asn316 is a D-glucose binding site. Residues 327 to 332 (VERAGR) lie on the Cytoplasmic side of the membrane. A helical membrane pass occupies residues 333-353 (RTLHLVGLGGMAVCAAVMTIA). The Extracellular portion of the chain corresponds to 354–362 (LALKEKWIR). Residues 363–388 (YISIVATFGFVALFEIGPGPIPWFIV) traverse the membrane as a helical segment. Residues Glu377 and Trp385 each contribute to the D-glucose site. Residues 389–398 (AELFSQGPRP) are Cytoplasmic-facing. The chain crosses the membrane as a helical span at residues 399-419 (AAMAVAGCSNWTSNFLVGMLF). Over 420–428 (PYAEKLCGP) the chain is Extracellular. Residues 429-449 (YVFLIFLVFLLIFFIFTYFKV) form a helical membrane-spanning segment. The Cytoplasmic segment spans residues 450–496 (PETKGRTFEDISRGFEEQVETSSPSSPPIEKNPMVEMNSIEPDKEVA). Positions 464–496 (FEEQVETSSPSSPPIEKNPMVEMNSIEPDKEVA) are disordered.

It belongs to the major facilitator superfamily. Sugar transporter (TC 2.A.1.1) family. Glucose transporter subfamily.

The protein resides in the cell membrane. The protein localises to the perikaryon. It localises to the cell projection. It carries out the reaction D-glucose(out) = D-glucose(in). The catalysed reaction is D-galactose(in) = D-galactose(out). Its activity is regulated as follows. Deoxyglucose transport is inhibited by D-glucose, D-galactose and maltose. Galactose transport is inhibited by D-glucose and maltose. Functionally, facilitative glucose transporter. Can also mediate the uptake of various other monosaccharides across the cell membrane. Mediates the uptake of glucose, 2-deoxyglucose, galactose, mannose, xylose and fucose, and probably also dehydroascorbate. Does not mediate fructose transport. Required for mesendoderm differentiation. The protein is Solute carrier family 2, facilitated glucose transporter member 3 of Gallus gallus (Chicken).